The sequence spans 193 residues: Chaperone protein TorD (193 aa).

Belongs to the TorD/DmsD family. TorD subfamily.

It localises to the cytoplasm. Functionally, involved in the biogenesis of TorA. Acts on TorA before the insertion of the molybdenum cofactor and, as a result, probably favors a conformation of the apoenzyme that is competent for acquiring the cofactor. The polypeptide is Chaperone protein TorD (Actinobacillus succinogenes (strain ATCC 55618 / DSM 22257 / CCUG 43843 / 130Z)).